Reading from the N-terminus, the 474-residue chain is tRNA-2-methylthio-N(6)-dimethylallyladenosine synthase (474 aa).

One can recognise an MTTase N-terminal domain in the interval 3–120; it reads KKLHIKTWGC…LPEMINHVNG (118 aa). Cysteine 12, cysteine 49, cysteine 83, cysteine 157, cysteine 161, and cysteine 164 together coordinate [4Fe-4S] cluster. A Radical SAM core domain is found at 143-375; sequence RAEGPTAFVS…QERITQQAMQ (233 aa). The region spanning 378 to 441 is the TRAM domain; that stretch reads RRMKGKVQRI…PNSLRGVLLR (64 aa).

This sequence belongs to the methylthiotransferase family. MiaB subfamily. In terms of assembly, monomer. [4Fe-4S] cluster serves as cofactor.

Its subcellular location is the cytoplasm. The catalysed reaction is N(6)-dimethylallyladenosine(37) in tRNA + (sulfur carrier)-SH + AH2 + 2 S-adenosyl-L-methionine = 2-methylsulfanyl-N(6)-dimethylallyladenosine(37) in tRNA + (sulfur carrier)-H + 5'-deoxyadenosine + L-methionine + A + S-adenosyl-L-homocysteine + 2 H(+). Functionally, catalyzes the methylthiolation of N6-(dimethylallyl)adenosine (i(6)A), leading to the formation of 2-methylthio-N6-(dimethylallyl)adenosine (ms(2)i(6)A) at position 37 in tRNAs that read codons beginning with uridine. This chain is tRNA-2-methylthio-N(6)-dimethylallyladenosine synthase, found in Sodalis glossinidius (strain morsitans).